The chain runs to 291 residues: Bifunctional protein FolD (291 aa).

NADP(+)-binding positions include 167–169 (GRS), serine 192, and isoleucine 233.

This sequence belongs to the tetrahydrofolate dehydrogenase/cyclohydrolase family. As to quaternary structure, homodimer.

It carries out the reaction (6R)-5,10-methylene-5,6,7,8-tetrahydrofolate + NADP(+) = (6R)-5,10-methenyltetrahydrofolate + NADPH. The enzyme catalyses (6R)-5,10-methenyltetrahydrofolate + H2O = (6R)-10-formyltetrahydrofolate + H(+). It functions in the pathway one-carbon metabolism; tetrahydrofolate interconversion. Functionally, catalyzes the oxidation of 5,10-methylenetetrahydrofolate to 5,10-methenyltetrahydrofolate and then the hydrolysis of 5,10-methenyltetrahydrofolate to 10-formyltetrahydrofolate. The sequence is that of Bifunctional protein FolD from Dichelobacter nodosus (strain VCS1703A).